Reading from the N-terminus, the 476-residue chain is Eukaryotic translation initiation factor 3 subunit L (476 aa).

The 196-residue stretch at 257 to 452 (DAIRMFSHIL…DLDYALENDL (196 aa)) folds into the PCI domain.

Belongs to the eIF-3 subunit L family. Component of the eukaryotic translation initiation factor 3 (eIF-3) complex.

The protein resides in the cytoplasm. Its function is as follows. Component of the eukaryotic translation initiation factor 3 (eIF-3) complex, which is involved in protein synthesis of a specialized repertoire of mRNAs and, together with other initiation factors, stimulates binding of mRNA and methionyl-tRNAi to the 40S ribosome. The eIF-3 complex specifically targets and initiates translation of a subset of mRNAs involved in cell proliferation. The polypeptide is Eukaryotic translation initiation factor 3 subunit L (Aspergillus niger (strain ATCC MYA-4892 / CBS 513.88 / FGSC A1513)).